A 125-amino-acid chain; its full sequence is Period circadian protein (125 aa).

Positions 1–125 are disordered; the sequence is EGSGGSGSSG…VTLTESLLNK (125 aa). Repeat copies occupy residues 30 to 31, 33 to 34, and 35 to 36. Gly residues predominate over residues 30–84; the sequence is GTGGTGTNTGTNTGTGTGTGTGTGTGTGTGTGTGTGTGTGTGTGTGTGKGAGAGT. A 28 X 2 AA approximate tandem repeats of G-[TA] region spans residues 30-86; it reads GTGGTGTNTGTNTGTGTGTGTGTGTGTGTGTGTGTGTGTGTGTGTGTGKGAGAGTGT. Residues 37–38 form a 4; approximate repeat; sequence NT. Repeat 5 spans residues 39 to 40; it reads GT. A 6; approximate repeat occupies 41–42; sequence NT. 17 consecutive repeat copies span residues 43 to 44, 45 to 46, 47 to 48, 49 to 50, 51 to 52, 53 to 54, 55 to 56, 57 to 58, 59 to 60, 61 to 62, 63 to 64, 65 to 66, 67 to 68, 69 to 70, 71 to 72, 73 to 74, and 75 to 76. A 24; approximate repeat occupies 77 to 78; that stretch reads GK. 4 repeat units span residues 79–80, 81–82, 83–84, and 85–86. The segment covering 85–112 has biased composition (low complexity); sequence GTATNETAGPGTTTTTTTRSTTTAATAA. Over residues 116-125 the composition is skewed to polar residues; the sequence is VTLTESLLNK.

Forms a heterodimer with timeless (TIM); the complex then translocates into the nucleus. Post-translationally, phosphorylated with a circadian rhythmicity, probably by the double-time protein (dbt). Phosphorylation could be implicated in the stability of per monomer and in the formation of heterodimer per-tim.

The protein resides in the nucleus. Its subcellular location is the cytoplasm. The protein localises to the perinuclear region. In terms of biological role, essential for biological clock functions. Determines the period length of circadian and ultradian rhythms; an increase in PER dosage leads to shortened circadian rhythms and a decrease leads to lengthened circadian rhythms. Essential for the circadian rhythmicity of locomotor activity, eclosion behavior, and for the rhythmic component of the male courtship song that originates in the thoracic nervous system. The biological cycle depends on the rhythmic formation and nuclear localization of the TIM-PER complex. Light induces the degradation of TIM, which promotes elimination of PER. Nuclear activity of the heterodimer coordinatively regulates PER and TIM transcription through a negative feedback loop. Behaves as a negative element in circadian transcriptional loop. Does not appear to bind DNA, suggesting indirect transcriptional inhibition. The chain is Period circadian protein (per) from Drosophila ananassae (Fruit fly).